Consider the following 170-residue polypeptide: MSVLQVLTFPDDRLRTVAKPVEKVTPEIQKIVDDMIETMYDEEGIGLAATQVDIHQRIVVIDISESRNEPMVLINPEILEKRGEDGIEEGCLSVPGARALVPRAAEVTVKALDRDGHEFTLEADDLLAICIQHELDHLQGKLFVDYLSPLKRKRIQDKLAKIKRFNEKQR.

The Fe cation site is built by Cys-91 and His-133. The active site involves Glu-134. A Fe cation-binding site is contributed by His-137.

This sequence belongs to the polypeptide deformylase family. It depends on Fe(2+) as a cofactor.

It catalyses the reaction N-terminal N-formyl-L-methionyl-[peptide] + H2O = N-terminal L-methionyl-[peptide] + formate. Removes the formyl group from the N-terminal Met of newly synthesized proteins. Requires at least a dipeptide for an efficient rate of reaction. N-terminal L-methionine is a prerequisite for activity but the enzyme has broad specificity at other positions. This is Peptide deformylase 1 from Vibrio vulnificus (strain CMCP6).